The primary structure comprises 208 residues: Small ribosomal subunit protein eS8 (208 aa).

Residues 1–27 (MGISRDNWHKRRKTGGKRKPYHKKRKY) form a disordered region. A lipid anchor (N-myristoyl glycine) is attached at Gly2. Over residues 8 to 26 (WHKRRKTGGKRKPYHKKRK) the composition is skewed to basic residues. Residues Lys37 and Lys128 each carry the N6-acetyllysine modification. The residue at position 130 (Thr130) is a Phosphothreonine. Position 160 is a phosphoserine (Ser160). Glycyl lysine isopeptide (Lys-Gly) (interchain with G-Cter in SUMO2) cross-links involve residues Lys170 and Lys193.

It belongs to the eukaryotic ribosomal protein eS8 family. In terms of assembly, component of the small ribosomal subunit. Identified in a IGF2BP1-dependent mRNP granule complex containing untranslated mRNAs. Part of the small subunit (SSU) processome, composed of more than 70 proteins and the RNA chaperone small nucleolar RNA (snoRNA) U3.

Its subcellular location is the cytoplasm. It localises to the membrane. The protein localises to the nucleus. It is found in the nucleolus. Component of the small ribosomal subunit. The ribosome is a large ribonucleoprotein complex responsible for the synthesis of proteins in the cell. Part of the small subunit (SSU) processome, first precursor of the small eukaryotic ribosomal subunit. During the assembly of the SSU processome in the nucleolus, many ribosome biogenesis factors, an RNA chaperone and ribosomal proteins associate with the nascent pre-rRNA and work in concert to generate RNA folding, modifications, rearrangements and cleavage as well as targeted degradation of pre-ribosomal RNA by the RNA exosome. The sequence is that of Small ribosomal subunit protein eS8 (Rps8) from Mus musculus (Mouse).